A 394-amino-acid chain; its full sequence is Uroporphyrinogen decarboxylase 2, chloroplastic (394 aa).

Residues 74–78 (RQAGR), Phe93, Ser123, Asp124, Tyr201, Ser256, and His371 each bind substrate.

It belongs to the uroporphyrinogen decarboxylase family. Homodimer.

It is found in the plastid. Its subcellular location is the chloroplast. It catalyses the reaction uroporphyrinogen III + 4 H(+) = coproporphyrinogen III + 4 CO2. It functions in the pathway porphyrin-containing compound metabolism; protoporphyrin-IX biosynthesis; coproporphyrinogen-III from 5-aminolevulinate: step 4/4. Its pathway is porphyrin-containing compound metabolism; chlorophyll biosynthesis. Functionally, catalyzes the decarboxylation of four acetate groups of uroporphyrinogen-III to yield coproporphyrinogen-III. This Arabidopsis thaliana (Mouse-ear cress) protein is Uroporphyrinogen decarboxylase 2, chloroplastic (HEME2).